Here is a 297-residue protein sequence, read N- to C-terminus: Large ribosomal subunit protein uL18 (297 aa).

Gly-2 is subject to N-acetylglycine. An N6-acetyllysine mark is found at Lys-5 and Lys-48. Residue Ser-185 is modified to Phosphoserine. At Lys-220 the chain carries N6-acetyllysine; alternate. Lys-220 participates in a covalent cross-link: Glycyl lysine isopeptide (Lys-Gly) (interchain with G-Cter in SUMO1); alternate. Lys-220 participates in a covalent cross-link: Glycyl lysine isopeptide (Lys-Gly) (interchain with G-Cter in SUMO2); alternate. At Thr-232 the chain carries Phosphothreonine. The disordered stretch occupies residues 253–297 (YEKKPKREVKKKRWNRPKMSLAQKKDRVAQKKASFLRAQERAAES). The span at 258 to 268 (KREVKKKRWNR) shows a compositional bias: basic residues. Ser-272 bears the Phosphoserine mark.

It belongs to the universal ribosomal protein uL18 family. Component of the large ribosomal subunit (LSU). Part of the 5S RNP complex, which is a LSU subcomplex composed of the 5S RNA, RPL5 and RPL11. Component of a hexameric 5S RNP precursor complex, composed of 5S RNA, RRS1, RPF2/BXDC1, RPL5, RPL11 and HEATR3; this complex acts as a precursor for ribosome assembly. Interacts with isoform 1 of NVL in an ATP-dependent manner. Interacts with RRP1B. Interacts with IPO5, IPO7 and KPNB1; these interactions may be involved in RPL5 nuclear import for the assembly of ribosomal subunits.

The protein resides in the cytoplasm. The protein localises to the nucleus. It localises to the nucleolus. Functionally, component of the ribosome, a large ribonucleoprotein complex responsible for the synthesis of proteins in the cell. The small ribosomal subunit (SSU) binds messenger RNAs (mRNAs) and translates the encoded message by selecting cognate aminoacyl-transfer RNA (tRNA) molecules. The large subunit (LSU) contains the ribosomal catalytic site termed the peptidyl transferase center (PTC), which catalyzes the formation of peptide bonds, thereby polymerizing the amino acids delivered by tRNAs into a polypeptide chain. The nascent polypeptides leave the ribosome through a tunnel in the LSU and interact with protein factors that function in enzymatic processing, targeting, and the membrane insertion of nascent chains at the exit of the ribosomal tunnel. As part of the 5S RNP/5S ribonucleoprotein particle it is an essential component of the LSU, required for its formation and the maturation of rRNAs. It also couples ribosome biogenesis to p53/TP53 activation. As part of the 5S RNP it accumulates in the nucleoplasm and inhibits MDM2, when ribosome biogenesis is perturbed, mediating the stabilization and the activation of TP53. This chain is Large ribosomal subunit protein uL18 (RPL5), found in Oryctolagus cuniculus (Rabbit).